The primary structure comprises 235 residues: Phosphoribosylaminoimidazole-succinocarboxamide synthase (235 aa).

The protein belongs to the SAICAR synthetase family.

It carries out the reaction 5-amino-1-(5-phospho-D-ribosyl)imidazole-4-carboxylate + L-aspartate + ATP = (2S)-2-[5-amino-1-(5-phospho-beta-D-ribosyl)imidazole-4-carboxamido]succinate + ADP + phosphate + 2 H(+). It participates in purine metabolism; IMP biosynthesis via de novo pathway; 5-amino-1-(5-phospho-D-ribosyl)imidazole-4-carboxamide from 5-amino-1-(5-phospho-D-ribosyl)imidazole-4-carboxylate: step 1/2. The chain is Phosphoribosylaminoimidazole-succinocarboxamide synthase from Thermoanaerobacter pseudethanolicus (strain ATCC 33223 / 39E) (Clostridium thermohydrosulfuricum).